Consider the following 831-residue polypeptide: Periplasmic nitrate reductase (831 aa).

The tat-type signal signal peptide spans 1 to 29; sequence MKISRRDFIKQTAITATASVAGVTLPAGA. The 4Fe-4S Mo/W bis-MGD-type domain maps to 41–97; sequence LKWSKAPCRFCGTGCGVTVAVKDNKVVATQGDPQAEVNKGLNCVKGYFLSKIMYGQD. [4Fe-4S] cluster contacts are provided by Cys-48, Cys-51, Cys-55, and Cys-83. Residues Lys-85, Gln-152, Asn-177, Cys-181, 214-221, 245-249, 264-266, Met-375, Gln-379, Asn-485, 511-512, Lys-534, Asp-561, and 721-730 contribute to the Mo-bis(molybdopterin guanine dinucleotide) site; these read WGSNMAEM, STFTH, QTD, SD, and TGRVLEHWHS. A substrate-binding site is contributed by Trp-797. The Mo-bis(molybdopterin guanine dinucleotide) site is built by Asn-805 and Lys-822.

The protein belongs to the prokaryotic molybdopterin-containing oxidoreductase family. NasA/NapA/NarB subfamily. As to quaternary structure, component of the periplasmic nitrate reductase NapAB complex composed of NapA and NapB. It depends on [4Fe-4S] cluster as a cofactor. Mo-bis(molybdopterin guanine dinucleotide) is required as a cofactor. Predicted to be exported by the Tat system. The position of the signal peptide cleavage has been experimentally proven.

Its subcellular location is the periplasm. The enzyme catalyses 2 Fe(II)-[cytochrome] + nitrate + 2 H(+) = 2 Fe(III)-[cytochrome] + nitrite + H2O. Catalytic subunit of the periplasmic nitrate reductase complex NapAB. Receives electrons from NapB and catalyzes the reduction of nitrate to nitrite. The protein is Periplasmic nitrate reductase of Cupriavidus necator (strain ATCC 17699 / DSM 428 / KCTC 22496 / NCIMB 10442 / H16 / Stanier 337) (Ralstonia eutropha).